Consider the following 314-residue polypeptide: Ribonuclease Z (314 aa).

Residues H62, H64, D66, H67, H144, D215, and H273 each contribute to the Zn(2+) site. The active-site Proton acceptor is the D66.

Belongs to the RNase Z family. Homodimer. Zn(2+) is required as a cofactor.

It catalyses the reaction Endonucleolytic cleavage of RNA, removing extra 3' nucleotides from tRNA precursor, generating 3' termini of tRNAs. A 3'-hydroxy group is left at the tRNA terminus and a 5'-phosphoryl group is left at the trailer molecule.. Its function is as follows. Zinc phosphodiesterase, which displays some tRNA 3'-processing endonuclease activity. Probably involved in tRNA maturation, by removing a 3'-trailer from precursor tRNA. In Prochlorococcus marinus (strain NATL2A), this protein is Ribonuclease Z.